The following is a 304-amino-acid chain: Phosphoribosylaminoimidazole-succinocarboxamide synthase (304 aa).

Belongs to the SAICAR synthetase family.

It catalyses the reaction 5-amino-1-(5-phospho-D-ribosyl)imidazole-4-carboxylate + L-aspartate + ATP = (2S)-2-[5-amino-1-(5-phospho-beta-D-ribosyl)imidazole-4-carboxamido]succinate + ADP + phosphate + 2 H(+). It functions in the pathway purine metabolism; IMP biosynthesis via de novo pathway; 5-amino-1-(5-phospho-D-ribosyl)imidazole-4-carboxamide from 5-amino-1-(5-phospho-D-ribosyl)imidazole-4-carboxylate: step 1/2. In Komagataella pastoris (Yeast), this protein is Phosphoribosylaminoimidazole-succinocarboxamide synthase (ADE1).